The primary structure comprises 402 residues: Centromere protein C (402 aa).

K1 participates in a covalent cross-link: Glycyl lysine isopeptide (Lys-Gly) (interchain with G-Cter in SUMO2). Residues K1 to S12 show a composition bias toward low complexity. The disordered stretch occupies residues K1–T118. At S5 the chain carries Phosphoserine. Positions Q25–K42 match the Nuclear localization signal motif. Positions A44–N53 are enriched in basic residues. The span at P88–T118 shows a compositional bias: polar residues. K186 is covalently cross-linked (Glycyl lysine isopeptide (Lys-Gly) (interchain with G-Cter in SUMO2)). T193 bears the Phosphothreonine mark. An MIF2 homology domain II region spans residues V196 to Q218. S222 and S232 each carry phosphoserine. The Nuclear localization signal signature appears at K239–R257. Residue K266 forms a Glycyl lysine isopeptide (Lys-Gly) (interchain with G-Cter in SUMO2) linkage. The segment at L349–S402 is MIF2 homology domain III.

It belongs to the CENP-C/MIF2 family. As to quaternary structure, oligomer. Component of the CENPA-NAC complex, at least composed of CENPA, CENPC, CENPH, CENPM, CENPN, CENPT and CENPU. The CENPA-NAC complex interacts with the CENPA-CAD complex, composed of CENPI, CENPK, CENPL, CENPO, CENPP, CENPQ, CENPR and CENPS. Binds to DAXX. Interacts with DNMT3B. Interacts directly with CENPA. Identified in a centromere complex containing histones H2A, H2B and H4, and at least CENPA, CENPB, CENPC, CENPT, CENPN, HJURP, SUPT16H, SSRP1 and RSF1. Interacts with MEIKIN.

Its subcellular location is the nucleus. It localises to the chromosome. It is found in the centromere. The protein resides in the kinetochore. Component of the CENPA-NAC (nucleosome-associated) complex, a complex that plays a central role in assembly of kinetochore proteins, mitotic progression and chromosome segregation. The CENPA-NAC complex recruits the CENPA-CAD (nucleosome distal) complex and may be involved in incorporation of newly synthesized CENPA into centromeres. CENPC recruits DNA methylation and DNMT3B to both centromeric and pericentromeric satellite repeats and regulates the histone code in these regions. The polypeptide is Centromere protein C (CENPC) (Ovis aries (Sheep)).